We begin with the raw amino-acid sequence, 300 residues long: Cation-efflux pump FieF (300 aa).

Transmembrane regions (helical) follow at residues Ala12–Trp32, Ile39–Val59, Ala82–Ile102, and Pro114–Phe134. 2 residues coordinate Zn(2+): Asp45 and Asp49. Residues His153 and Asp157 each contribute to the Zn(2+) site. A run of 2 helical transmembrane segments spans residues Ser156–His176 and Ala178–Gly198.

The protein belongs to the cation diffusion facilitator (CDF) transporter (TC 2.A.4) family. FieF subfamily. Homodimer.

It localises to the cell inner membrane. It carries out the reaction Zn(2+)(in) + H(+)(out) = Zn(2+)(out) + H(+)(in). The catalysed reaction is Cd(2+)(in) + H(+)(out) = Cd(2+)(out) + H(+)(in). It catalyses the reaction Fe(2+)(in) + H(+)(out) = Fe(2+)(out) + H(+)(in). Functionally, divalent metal cation transporter which exports Zn(2+), Cd(2+) and possibly Fe(2+). May be involved in zinc and iron detoxification by efflux. The protein is Cation-efflux pump FieF of Salmonella arizonae (strain ATCC BAA-731 / CDC346-86 / RSK2980).